Here is a 478-residue protein sequence, read N- to C-terminus: ATP synthase subunit beta (478 aa).

160–167 (GGAGVGKT) is an ATP binding site.

The protein belongs to the ATPase alpha/beta chains family. F-type ATPases have 2 components, CF(1) - the catalytic core - and CF(0) - the membrane proton channel. CF(1) has five subunits: alpha(3), beta(3), gamma(1), delta(1), epsilon(1). CF(0) has three main subunits: a(1), b(2) and c(9-12). The alpha and beta chains form an alternating ring which encloses part of the gamma chain. CF(1) is attached to CF(0) by a central stalk formed by the gamma and epsilon chains, while a peripheral stalk is formed by the delta and b chains.

It localises to the cell inner membrane. The catalysed reaction is ATP + H2O + 4 H(+)(in) = ADP + phosphate + 5 H(+)(out). Produces ATP from ADP in the presence of a proton gradient across the membrane. The catalytic sites are hosted primarily by the beta subunits. The polypeptide is ATP synthase subunit beta (Orientia tsutsugamushi (strain Ikeda) (Rickettsia tsutsugamushi)).